Reading from the N-terminus, the 354-residue chain is MSTITVDLATKKYDVKIDNTLHTRLGQEISAVWSARKISLLTDSNVGPLYLKDTAKQLREVGFDILELEVPAGESSKSLSVAGELIAKMAAAGFTRGDGVIALGGGVIGDLGGVVASLYMRGIAFIQIATSLTAQVDSSVGGKTAVNLGNTKNIAGSFYQPDLDLVDVTYLNTLTDRDLVEGYAEVVKTSALANQDFFDFTGQIKSVADIRHHAQELSKRAIAYKASVVMADEKEAGDRQFLNFGHTFGHAIELLAHGELRHGEAVAIGMIAISSRFEQHGIMPRGLTTELLSRLEAVGLPTHSHFIGTTDFFNHLINDKKNHDGILNLVALEKVGQPIIVKKKIADMPAFVEN.

NAD(+) is bound by residues 106–110 (GVIGD), 130–131 (TS), Lys143, and Lys152. Positions 185, 246, and 262 each coordinate Zn(2+).

The protein belongs to the sugar phosphate cyclases superfamily. Dehydroquinate synthase family. Co(2+) is required as a cofactor. Zn(2+) serves as cofactor. Requires NAD(+) as cofactor.

Its subcellular location is the cytoplasm. It carries out the reaction 7-phospho-2-dehydro-3-deoxy-D-arabino-heptonate = 3-dehydroquinate + phosphate. It participates in metabolic intermediate biosynthesis; chorismate biosynthesis; chorismate from D-erythrose 4-phosphate and phosphoenolpyruvate: step 2/7. In terms of biological role, catalyzes the conversion of 3-deoxy-D-arabino-heptulosonate 7-phosphate (DAHP) to dehydroquinate (DHQ). The sequence is that of 3-dehydroquinate synthase from Leuconostoc mesenteroides subsp. mesenteroides (strain ATCC 8293 / DSM 20343 / BCRC 11652 / CCM 1803 / JCM 6124 / NCDO 523 / NBRC 100496 / NCIMB 8023 / NCTC 12954 / NRRL B-1118 / 37Y).